Consider the following 357-residue polypeptide: MVKNNAGIVNMFEKRRTQTTTIPIIEIMREKRSEDLETEIVQGLQFDSLQLPQELLWDDAGQILFDDLCNSSTYYLTKKEKEILQKYSTDMAATIPEGSTLIELGCGSLRKTGILLSALEKSHKAVTYYALDVSQDSLENGLAQLHKGLGCLDHVELRGLWGTYEDAIAWLADQHPINVHNGITFLWMGNSMTNMHLAQAQSLLSRMTKTCIGSGIPCQILVSVDSCSAEDIVMGAYDTDSQPLKDFIMNGLKSANRILGKDVFCASDWTFGTVLDRVRHEVQVFYAPTRDVTIHIDSHPCKITKGEKIAVISSGKWPEPYFRSMLEGIGLQVLDLWRDSDQFYCMNPLPLICSFPG.

The protein belongs to the methyltransferase superfamily.

Its pathway is alkaloid biosynthesis. Its function is as follows. N-methyltransferase; part of the gene cluster that mediates the biosynthesis of the dimeric diketopiperazine alkaloid ditryptophenaline. The nonribosomal peptide synthase dtpA accepts L-tryptophan and L-phenylalanine as its substrates and forms the phenylalanyl-tryptophanyl cyclic dipeptide product cyclophenylalanyltryptophenyl. The N-methyltransferase dtpB is responsible for the N-methylation of cyclophenylalanyltryptophenyl to yield cyclo-N-methylphenylalanyltryptophenyl. The cytochrome P450 monooxygenase is responsible not only for pyrroloindole ring formation but also for concurrent dimerization of N-methylphenylalanyltryptophanyl diketopiperazine monomers into a homodimeric product. This is N-methyltransferase dtpB from Aspergillus flavus (strain ATCC 200026 / FGSC A1120 / IAM 13836 / NRRL 3357 / JCM 12722 / SRRC 167).